A 263-amino-acid polypeptide reads, in one-letter code: uncharacterized protein (263 aa).

The N-terminal stretch at 1 to 22 (MGYLKRLVLYIVIMVMSVFIIG) is a signal peptide. A lipid anchor (N-palmitoyl cysteine) is attached at Cys23. The S-diacylglycerol cysteine moiety is linked to residue Cys23.

This sequence belongs to the staphylococcal tandem lipoprotein family.

The protein resides in the cell membrane. This is an uncharacterized protein from Staphylococcus aureus (strain N315).